Here is a 64-residue protein sequence, read N- to C-terminus: Outer envelope membrane protein 7 (64 aa).

The Chloroplast intermembrane segment spans residues 1-11 (MGKTSGAKQAT). Residues 12-32 (VVVAAMALGWLAIEIAFKPFL) form a helical membrane-spanning segment. The short motif at 29-35 (KPFLDKF) is the AKR2A-binding sequence (ABS) required for chloroplast outer envelope membrane targeting element. The Cytoplasmic segment spans residues 33-64 (DKFRSSIDKSDPTKDPDDFDTAATATTSKEGL). A compositionally biased stretch (basic and acidic residues) spans 39-48 (IDKSDPTKDP). Residues 39 to 64 (IDKSDPTKDPDDFDTAATATTSKEGL) are disordered. Residues 53 to 64 (TAATATTSKEGL) show a composition bias toward low complexity.

Interacts with AKR2A. In terms of tissue distribution, confined to green tissues.

Its subcellular location is the plastid. It localises to the chloroplast outer membrane. The chain is Outer envelope membrane protein 7 from Arabidopsis thaliana (Mouse-ear cress).